Here is a 78-residue protein sequence, read N- to C-terminus: Small ribosomal subunit protein uS17 (78 aa).

Belongs to the universal ribosomal protein uS17 family. In terms of assembly, part of the 30S ribosomal subunit.

Its function is as follows. One of the primary rRNA binding proteins, it binds specifically to the 5'-end of 16S ribosomal RNA. This is Small ribosomal subunit protein uS17 from Sinorhizobium fredii (strain NBRC 101917 / NGR234).